The following is a 431-amino-acid chain: Trigger factor (431 aa).

Residues 160–245 enclose the PPIase FKBP-type domain; that stretch reads EDRVTIDFSG…LKKVEVMVLP (86 aa).

The protein belongs to the FKBP-type PPIase family. Tig subfamily.

The protein resides in the cytoplasm. The catalysed reaction is [protein]-peptidylproline (omega=180) = [protein]-peptidylproline (omega=0). Functionally, involved in protein export. Acts as a chaperone by maintaining the newly synthesized protein in an open conformation. Functions as a peptidyl-prolyl cis-trans isomerase. In Actinobacillus succinogenes (strain ATCC 55618 / DSM 22257 / CCUG 43843 / 130Z), this protein is Trigger factor.